The following is a 929-amino-acid chain: Ribonucleoside-diphosphate reductase large chain (929 aa).

In terms of domain architecture, ATP-cone spans 1–92; the sequence is MYVKKRDGRQ…VSNLHKQTKK (92 aa). ATP contacts are provided by residues 5-6, 11-17, Thr53, and Asp57; these read KR and ERVQFDK. Positions 202 and 217 each coordinate GDP. A disulfide bridge connects residues Cys218 and Cys444. DTTP contacts are provided by residues 226–228, Lys243, Arg256, and 263–264; these read DSI and AG. Asn427 provides a ligand contact to GDP. Asn427 functions as the Proton acceptor in the catalytic mechanism. Catalysis depends on Cys429, which acts as the Cysteine radical intermediate. GDP-binding positions include Glu431 and 605-608; that span reads TAST. The active-site Proton acceptor is the Glu431. The interval 789–904 is disordered; it reads ENTSGPRPYA…RDENIYSNAP (116 aa). The segment covering 800 to 809 has biased composition (polar residues); the sequence is TGVSGTSTPI. The segment covering 868-884 has biased composition (basic and acidic residues); it reads VKTEDIGSPLLERKEGQ. Residues 885-894 are compositionally biased toward acidic residues; it reads NEDVDEDSQE.

The protein belongs to the ribonucleoside diphosphate reductase large chain family.

It carries out the reaction a 2'-deoxyribonucleoside 5'-diphosphate + [thioredoxin]-disulfide + H2O = a ribonucleoside 5'-diphosphate + [thioredoxin]-dithiol. Under complex allosteric control mediated by deoxynucleoside triphosphates and ATP binding to separate specificity and activation sites on the large subunit. The type of nucleotide bound at the specificity site determines substrate preference. It seems probable that ATP makes the enzyme reduce CDP and UDP, dGTP favors ADP reduction and dTTP favors GDP reduction. Stimulated by ATP and inhibited by dATP binding to the activity site. In terms of biological role, provides the precursors necessary for DNA synthesis. Catalyzes the biosynthesis of deoxyribonucleotides from the corresponding ribonucleotides. This Neurospora crassa (strain ATCC 24698 / 74-OR23-1A / CBS 708.71 / DSM 1257 / FGSC 987) protein is Ribonucleoside-diphosphate reductase large chain (rnr-1).